A 519-amino-acid chain; its full sequence is Cytochrome P450 monooxygenase AtmP (519 aa).

Residues 21–41 (SMLLVVTLVILFLWFIIPSPV) form a helical membrane-spanning segment. Cys-457 serves as a coordination point for heme.

Belongs to the cytochrome P450 family. It depends on heme as a cofactor.

It localises to the membrane. It participates in secondary metabolite biosynthesis. In terms of biological role, cytochrome P450 monooxygenase; part of the ATM2 gene cluster that mediates the biosynthesis of aflatrem, a tremorgenic mycotoxin with acute neurotoxic effects. Synthesis of geranylgeranyl diphosphate (GGPP) by AtmG (a GGPP synthase) precedes condensation of GGPP with indole 3-glycerol phosphate, followed by epoxidation and cyclization by AtmM (a FAD-dependent monooxygenase) and AtmC (a prenyltransferase) to produce paspaline. AtmB is also essential for paspaline production, but its exact role has not been identified yet. AtmP, a cytochrome P450 monooxygenase, subsequently converts paspaline to 13-desoxypaxilline via PC-M6 by removal of the C-30 methyl group and oxidation at C-10. AtmQ, a cytochrome P450 monooxygenase, then catalyzes the oxidation of 13-desoxypaxilline, first at C-7 to produce paspalicine and then at C-13 to form paspalinine. Finally, AtmD prenylates paspalinine to form aflatrem. In Aspergillus flavus, this protein is Cytochrome P450 monooxygenase AtmP.